The primary structure comprises 125 residues: Small ribosomal subunit protein uS13 (125 aa).

Belongs to the universal ribosomal protein uS13 family. Part of the 30S ribosomal subunit. Forms a loose heterodimer with protein S19. Forms two bridges to the 50S subunit in the 70S ribosome.

Its function is as follows. Located at the top of the head of the 30S subunit, it contacts several helices of the 16S rRNA. In the 70S ribosome it contacts the 23S rRNA (bridge B1a) and protein L5 of the 50S subunit (bridge B1b), connecting the 2 subunits; these bridges are implicated in subunit movement. Contacts the tRNAs in the A and P-sites. The sequence is that of Small ribosomal subunit protein uS13 from Granulibacter bethesdensis (strain ATCC BAA-1260 / CGDNIH1).